A 358-amino-acid chain; its full sequence is Chondroadherin (358 aa).

The first 20 residues, 1 to 20 (MARALLFSLVFLAILLPALA), serve as a signal peptide directing secretion. The LRRNT domain maps to 21-50 (ACPQNCHCHGDLQHVICDKVGLQKIPKVSE). A disulfide bond links C22 and C37. LRR repeat units lie at residues 51-72 (TTKL…SFRT), 75-96 (NLVS…AFRG), 99-120 (QLIY…AFDD), 123-144 (ELTY…LLSP), 147-168 (NLFI…AFQG), 171-192 (DLRW…SLDD), 195-216 (NLAK…ALSK), 219-240 (VVEE…AFQS), 244-265 (YLET…AFSG), and 268-289 (TLKH…FPFD). An O-linked (GalNAc...) serine glycan is attached at S143. The LRRCT domain maps to 299–347 (NPWKCTCQLRGLRRWLEAKASRPDATCSSPAKFKGQRIRDTDALRSCKS). 2 disulfide bridges follow: C303/C345 and C305/C325. Residues 322–358 (DATCSSPAKFKGQRIRDTDALRSCKSPTKRSKKAGRH) are disordered. Positions 348–358 (PTKRSKKAGRH) are enriched in basic residues.

This sequence belongs to the small leucine-rich proteoglycan (SLRP) family. SLRP class IV subfamily. As to quaternary structure, mostly monomeric. Interacts with collagen type II. In terms of tissue distribution, cartilage.

The protein localises to the secreted. It is found in the extracellular space. Its subcellular location is the extracellular matrix. Its function is as follows. Promotes attachment of chondrocytes, fibroblasts, and osteoblasts. This binding is mediated (at least for chondrocytes and fibroblasts) by the integrin alpha(2)beta(1). May play an important role in the regulation of chondrocyte growth and proliferation. The sequence is that of Chondroadherin (Chad) from Mus musculus (Mouse).